Consider the following 429-residue polypeptide: Glutamate-1-semialdehyde 2,1-aminomutase 2 (429 aa).

K268 bears the N6-(pyridoxal phosphate)lysine mark.

It belongs to the class-III pyridoxal-phosphate-dependent aminotransferase family. HemL subfamily. Homodimer. Pyridoxal 5'-phosphate serves as cofactor.

The protein localises to the cytoplasm. It catalyses the reaction (S)-4-amino-5-oxopentanoate = 5-aminolevulinate. It functions in the pathway porphyrin-containing compound metabolism; protoporphyrin-IX biosynthesis; 5-aminolevulinate from L-glutamyl-tRNA(Glu): step 2/2. The sequence is that of Glutamate-1-semialdehyde 2,1-aminomutase 2 from Bacillus anthracis (strain A0248).